Consider the following 235-residue polypeptide: Transmembrane protein 215 (235 aa).

A run of 2 helical transmembrane segments spans residues L12 to M32 and I40 to A60. The segment at S99–E145 is disordered. A compositionally biased stretch (polar residues) spans S125 to P140.

It localises to the membrane. In Homo sapiens (Human), this protein is Transmembrane protein 215 (TMEM215).